A 1823-amino-acid polypeptide reads, in one-letter code: Bromodomain-containing protein DDB_G0280777 (1823 aa).

Disordered stretches follow at residues 44-83 and 200-281; these read DNNN…EEDE and LKQT…RTTS. Over residues 65 to 77 the composition is skewed to basic and acidic residues; that stretch reads SNKEEEKEEKEEK. Over residues 210-224 the composition is skewed to basic residues; sequence KRRNQQHQNLLKKQK. Residues 225 to 250 are compositionally biased toward basic and acidic residues; that stretch reads IQKEKEEREQKEKEQKEKEQKEKEEQ. The span at 251 to 262 shows a compositional bias: low complexity; sequence QQQLFLLQQQQQ. Positions 306–413 constitute a Bromo domain; the sequence is EAQEEMYDQL…KKSKDLMKNV (108 aa). Disordered stretches follow at residues 429 to 654, 753 to 781, 855 to 886, 949 to 993, 1055 to 1079, 1190 to 1386, 1453 to 1477, and 1679 to 1823; these read ENKN…EEQT, NCNN…NNSL, INDN…NNKP, NSSK…DEDF, LPNN…PPPS, IDPK…IQAS, QLQQ…QTPQ, and QQQQ…QKKQ. Low complexity-rich tracts occupy residues 432–486, 494–511, 520–555, and 570–579; these read NNNN…NTPL, CSPS…TPQS, QQQQ…ISPR, and SSSSLSSSSL. The span at 580-590 shows a compositional bias: polar residues; it reads ALNSQNENGVN. Residues 601 to 614 are compositionally biased toward basic and acidic residues; it reads MESEESTNVKKEEN. Residues 631–643 are compositionally biased toward acidic residues; sequence EGEEQQEQEDEEQ. Low complexity-rich tracts occupy residues 753 to 779, 863 to 884, 949 to 958, 1055 to 1071, and 1205 to 1378; these read NCNN…NNNN, NNNN…NNNN, NSSKSNNNSN, and LPNN…TTQL. The segment covering 1679–1705 has biased composition (low complexity); it reads QQQQPQQQQQQPQQQPQQQPQQQQQPQ. Composition is skewed to basic and acidic residues over residues 1716–1737 and 1744–1755; these read PKEK…EKDR and KTESKKESKKSL. Low complexity-rich tracts occupy residues 1756–1767 and 1789–1806; these read NDSSNSDINTSV and SSKQ…TQDS. Residues 1813–1823 are compositionally biased toward basic residues; the sequence is KKKRGRPQKKQ.

This Dictyostelium discoideum (Social amoeba) protein is Bromodomain-containing protein DDB_G0280777.